Reading from the N-terminus, the 233-residue chain is Translation initiation factor 6 (233 aa).

It belongs to the eIF-6 family.

Its function is as follows. Binds to the 50S ribosomal subunit and prevents its association with the 30S ribosomal subunit to form the 70S initiation complex. In Aeropyrum pernix (strain ATCC 700893 / DSM 11879 / JCM 9820 / NBRC 100138 / K1), this protein is Translation initiation factor 6.